Here is a 95-residue protein sequence, read N- to C-terminus: Co-chaperonin GroES (95 aa).

The protein belongs to the GroES chaperonin family. As to quaternary structure, heptamer of 7 subunits arranged in a ring. Interacts with the chaperonin GroEL.

The protein resides in the cytoplasm. Together with the chaperonin GroEL, plays an essential role in assisting protein folding. The GroEL-GroES system forms a nano-cage that allows encapsulation of the non-native substrate proteins and provides a physical environment optimized to promote and accelerate protein folding. GroES binds to the apical surface of the GroEL ring, thereby capping the opening of the GroEL channel. The sequence is that of Co-chaperonin GroES from Beijerinckia indica subsp. indica (strain ATCC 9039 / DSM 1715 / NCIMB 8712).